A 186-amino-acid chain; its full sequence is Lipid A palmitoyltransferase PagP (186 aa).

The first 25 residues, 1-25, serve as a signal peptide directing secretion; sequence MNVSKYVAIFSFVFIQLISVGKVFA. Residues H58, D101, and S102 contribute to the active site.

It belongs to the lipid A palmitoyltransferase family. In terms of assembly, homodimer.

It localises to the cell outer membrane. The enzyme catalyses lipid A (E. coli) + a 1-hexadecanoyl-2-acyl-sn-glycero-3-phosphocholine = hepta-acyl lipid A (E. coli) + a 2-acyl-sn-glycero-3-phosphocholine. The catalysed reaction is lipid IIA + a 1-hexadecanoyl-2-acyl-sn-glycero-3-phosphocholine = lipid IIB + a 2-acyl-sn-glycero-3-phosphocholine. It carries out the reaction lipid IVA (E. coli) + a 1-hexadecanoyl-2-acyl-sn-glycero-3-phosphocholine = lipid IVB (E. coli) + a 2-acyl-sn-glycero-3-phosphocholine. Inhibited by lauryldimethylamine oxide (LDAO) and dodecylphosphocholine (DPC). Transfers a palmitate residue from the sn-1 position of a phospholipid to the N-linked hydroxymyristate on the proximal unit of lipid A or its precursors. Phosphatidylglycerol (PtdGro), phosphatidylethanolamine (PtdEtn), phosphatidylserine (PtdSer) and phosphatidic acid (Ptd-OH) are all effective acyl donors. The chain is Lipid A palmitoyltransferase PagP from Escherichia coli (strain K12).